The chain runs to 101 residues: Small ubiquitin-related modifier 1 (101 aa).

The region spanning 20 to 97 is the Ubiquitin-like domain; it reads EYIKLKVIGQ…IEVYQEQTGG (78 aa). A Glycyl lysine isopeptide (Gly-Lys) (interchain with K-? in acceptor proteins) cross-link involves residue G97. The propeptide occupies 98-101; sequence HSTV.

It belongs to the ubiquitin family. SUMO subfamily. Interacts with SAE2, UBE2I, RANBP2, PIAS1 and PIAS2. Covalently attached to a number of proteins. In terms of processing, cleavage of precursor form by a sentrin-specific protease is necessary for function.

Its subcellular location is the nucleus membrane. It is found in the nucleus speckle. The protein localises to the cytoplasm. The protein resides in the nucleus. It localises to the PML body. Its subcellular location is the cell membrane. Its function is as follows. Ubiquitin-like protein that can be covalently attached to proteins as a monomer or a lysine-linked polymer. Covalent attachment via an isopeptide bond to its substrates requires prior activation by the E1 complex SAE1-SAE2 and linkage to the E2 enzyme UBE2I. This post-translational modification on lysine residues of proteins plays a crucial role in a number of cellular processes such as nuclear transport, DNA replication and repair, mitosis and signal transduction. Polymeric SUMO1 chains are also susceptible to polyubiquitination which functions as a signal for proteasomal degradation of modified proteins. The chain is Small ubiquitin-related modifier 1 (SUMO1) from Gallus gallus (Chicken).